The primary structure comprises 373 residues: Chaperone protein DnaJ (373 aa).

Residues 4-69 (DYYETLSVER…SKRRIYDTYG (66 aa)) form the J domain. Residues 131–209 (GVSKEVKLSR…CHGEGLVKKT (79 aa)) form a CR-type zinc finger. Zn(2+)-binding residues include cysteine 144, cysteine 147, cysteine 161, cysteine 164, cysteine 183, cysteine 186, cysteine 197, and cysteine 200. CXXCXGXG motif repeat units follow at residues 144 to 151 (CWTCEGTG), 161 to 168 (CPTCNGRG), 183 to 190 (CPECEGEG), and 197 to 204 (CNDCHGEG).

Belongs to the DnaJ family. In terms of assembly, homodimer. Requires Zn(2+) as cofactor.

It localises to the cytoplasm. In terms of biological role, participates actively in the response to hyperosmotic and heat shock by preventing the aggregation of stress-denatured proteins and by disaggregating proteins, also in an autonomous, DnaK-independent fashion. Unfolded proteins bind initially to DnaJ; upon interaction with the DnaJ-bound protein, DnaK hydrolyzes its bound ATP, resulting in the formation of a stable complex. GrpE releases ADP from DnaK; ATP binding to DnaK triggers the release of the substrate protein, thus completing the reaction cycle. Several rounds of ATP-dependent interactions between DnaJ, DnaK and GrpE are required for fully efficient folding. Also involved, together with DnaK and GrpE, in the DNA replication of plasmids through activation of initiation proteins. This chain is Chaperone protein DnaJ, found in Desulfotalea psychrophila (strain LSv54 / DSM 12343).